Reading from the N-terminus, the 86-residue chain is Precursor of CEP4 (86 aa).

Positions 1-30 (MVSRGCSITVLFRFLIVLLVIQVHFENTKA) are cleaved as a signal peptide. Residues 31–64 (ARHAPVVSWSPPEPPKDDFVWYHKINRFKNIEQD) constitute a propeptide that is removed on maturation. The segment at 63–86 (QDAFRPTHQGPSQGIGHKNPPGAP) is disordered. Pro-68 and Pro-73 each carry hydroxyproline. Positions 80 to 86 (KNPPGAP) are excised as a propeptide.

The protein belongs to the C-terminally encoded plant signaling peptide (CEP) family. As to quaternary structure, interacts with CEP receptors (e.g. CEPR1 and CEPR2). In terms of processing, the mature small signaling peptide is generated by proteolytic processing of the longer precursor. Expressed at low levels in flowers. Present in lateral roots, shoot apical meristem (SAM), flowers and siliques.

Its subcellular location is the secreted. It is found in the extracellular space. The protein localises to the apoplast. In terms of biological role, extracellular signaling peptide that represses primary root growth rate. Promotes shoot growth and modulates leaf morphology. Regulates systemic nitrogen (N)-demand signaling. Mediates up-regulation of genes involved in N uptake and assimilation pathways. In Arabidopsis thaliana (Mouse-ear cress), this protein is Precursor of CEP4.